The primary structure comprises 87 residues: U3-theraphotoxin-Hhn1d (87 aa).

Positions Met-1–Ala-24 are cleaved as a signal peptide. The propeptide occupies Ser-25–Arg-52. Intrachain disulfides connect Cys-54–Cys-67, Cys-61–Cys-72, and Cys-66–Cys-79.

Belongs to the neurotoxin 10 (Hwtx-1) family. 51 (Hntx-8) subfamily. Hntx-8 sub-subfamily. In terms of tissue distribution, expressed by the venom gland.

It localises to the secreted. In terms of biological role, ion channel inhibitor. The polypeptide is U3-theraphotoxin-Hhn1d (Cyriopagopus hainanus (Chinese bird spider)).